The primary structure comprises 240 residues: Type II restriction enzyme DdeI (240 aa).

The enzyme catalyses Endonucleolytic cleavage of DNA to give specific double-stranded fragments with terminal 5'-phosphates.. Functionally, a P subtype restriction enzyme that recognizes the double-stranded sequence 5'-CTNAG-3' and cleaves after C-1. This Desulfomicrobium norvegicum (strain DSM 1741 / NCIMB 8310) (Desulfovibrio baculatus (strain Norway 4)) protein is Type II restriction enzyme DdeI (ddeIR).